The primary structure comprises 453 residues: Pup--protein ligase (453 aa).

Glutamate 9 serves as a coordination point for Mg(2+). Arginine 53 contacts ATP. Mg(2+) is bound at residue tyrosine 55. Aspartate 57 serves as the catalytic Proton acceptor. Glutamate 63 contacts Mg(2+). Residues threonine 66 and tryptophan 420 each contribute to the ATP site.

The protein belongs to the Pup ligase/Pup deamidase family. Pup-conjugating enzyme subfamily.

The enzyme catalyses ATP + [prokaryotic ubiquitin-like protein]-L-glutamate + [protein]-L-lysine = ADP + phosphate + N(6)-([prokaryotic ubiquitin-like protein]-gamma-L-glutamyl)-[protein]-L-lysine.. Its pathway is protein degradation; proteasomal Pup-dependent pathway. It functions in the pathway protein modification; protein pupylation. Catalyzes the covalent attachment of the prokaryotic ubiquitin-like protein modifier Pup to the proteasomal substrate proteins, thereby targeting them for proteasomal degradation. This tagging system is termed pupylation. The ligation reaction involves the side-chain carboxylate of the C-terminal glutamate of Pup and the side-chain amino group of a substrate lysine. The polypeptide is Pup--protein ligase (Streptomyces scabiei (strain 87.22)).